Reading from the N-terminus, the 590-residue chain is L-erythrulose kinase (590 aa).

The DhaK domain maps to 7–331 (QPSSFARELT…WRAPADAPAF (325 aa)). The active-site Tele-hemiaminal-histidine intermediate is the His-217. Residues 366-568 (HCVAAALNAA…LAMILDAVSA (203 aa)) form the DhaL domain. ADP is bound by residues 398 to 401 (HGIG), 441 to 442 (TS), Gly-483, Arg-540, and 553 to 555 (DAG).

It carries out the reaction L-erythrulose + ATP = L-erythrulose 1-phosphate + ADP + H(+). It functions in the pathway carbohydrate metabolism. Functionally, involved in catabolism of D-apiose. Catalyzes the phosphorylation of L-erythrulose to L-erythrulose 1-phosphate. Can also phosphorylate D-erythrulose and dihydroxyacetone in vitro. The protein is L-erythrulose kinase of Pectobacterium atrosepticum (strain SCRI 1043 / ATCC BAA-672) (Erwinia carotovora subsp. atroseptica).